A 459-amino-acid polypeptide reads, in one-letter code: GTPase Der (459 aa).

EngA-type G domains follow at residues 3–169 and 183–358; these read PLVA…PPKE and IRLA…DQFR. Residues 9–16, 56–60, 119–122, 189–196, 236–240, and 301–304 each bind GTP; these read GRPNVGKS, DTGGF, NKLD, DTAGI, and NKWD. Residues 359 to 442 form the KH-like domain; the sequence is FRAPTPQLNR…PIRLIFKGRP (84 aa).

It belongs to the TRAFAC class TrmE-Era-EngA-EngB-Septin-like GTPase superfamily. EngA (Der) GTPase family. Associates with the 50S ribosomal subunit.

Its function is as follows. GTPase that plays an essential role in the late steps of ribosome biogenesis. In Myxococcus xanthus (strain DK1622), this protein is GTPase Der.